The primary structure comprises 418 residues: L-rhamnose isomerase (418 aa).

Mn(2+) is bound by residues His-262, Asp-294, and Asp-296.

The protein belongs to the rhamnose isomerase family. Homotetramer. Requires Mn(2+) as cofactor.

It localises to the cytoplasm. The enzyme catalyses L-rhamnopyranose = L-rhamnulose. Its pathway is carbohydrate degradation; L-rhamnose degradation; glycerone phosphate from L-rhamnose: step 1/3. Catalyzes the interconversion of L-rhamnose and L-rhamnulose. In Yersinia pseudotuberculosis serotype O:1b (strain IP 31758), this protein is L-rhamnose isomerase.